The following is a 388-amino-acid chain: MSALEAIKYSRGKLEVLDQLRLPHEHHYDEVSTSEEAFDCIKTMRVRGAPAIAIVAALAASVELHNGSCTATSPEEAIKYIDGRLDYLYESRPTAVDLGNAVKLLKKTVRDVKTEGLTDAEAKEAIIKAFIEASEEILAKDLKTNKSIGAFGAKWLQEQYKITDDSKITVITHCNTGSLATSGHGTALGIIRTLRDEGLLRHAYCTETRPYNQGSRLTAFELVHEGIPSTLITDSMAAALFRLRKAEENIAAVIVGADRVVRNGDTANKIGTYQLAVLAKHHGIKFMVAAPTTSIDVDTLTGDEIEIEQRKREELTQISGAVINADGSIDTSKSVRVAIADQRIGVWNPGFDVTPNEYIDAIVTEKGTVVKGEDGRFHFEDLMPERFQ.

Asp258 acts as the Proton donor in catalysis.

It belongs to the eIF-2B alpha/beta/delta subunits family. MtnA subfamily.

It localises to the cytoplasm. Its subcellular location is the nucleus. The catalysed reaction is 5-(methylsulfanyl)-alpha-D-ribose 1-phosphate = 5-(methylsulfanyl)-D-ribulose 1-phosphate. It functions in the pathway amino-acid biosynthesis; L-methionine biosynthesis via salvage pathway; L-methionine from S-methyl-5-thio-alpha-D-ribose 1-phosphate: step 1/6. Its function is as follows. Catalyzes the interconversion of methylthioribose-1-phosphate (MTR-1-P) into methylthioribulose-1-phosphate (MTRu-1-P). This Sordaria macrospora (strain ATCC MYA-333 / DSM 997 / K(L3346) / K-hell) protein is Methylthioribose-1-phosphate isomerase.